Here is a 182-residue protein sequence, read N- to C-terminus: Nascent polypeptide-associated complex subunit alpha (182 aa).

The NAC-A/B domain maps to 17-81; that stretch reads NKNEKKAKEL…AKVDDMNQRI (65 aa). A disordered region spans residues 120–148; that stretch reads ASLQGGESNADAAEDDNEEVDETGINPKD. The segment covering 131-141 has biased composition (acidic residues); the sequence is AAEDDNEEVDE. The UBA domain occupies 144-182; it reads INPKDIDLIVEQTRVSRGSAVKALKKHDGDMVNALMELS.

Belongs to the NAC-alpha family. Part of the nascent polypeptide-associated complex (NAC), consisting of EGD2 and EGD1. NAC associates with ribosomes via EGD1.

The protein localises to the cytoplasm. It is found in the nucleus. In terms of biological role, component of the nascent polypeptide-associated complex (NAC), a dynamic component of the ribosomal exit tunnel, protecting the emerging polypeptides from interaction with other cytoplasmic proteins to ensure appropriate nascent protein targeting. The NAC complex also promotes mitochondrial protein import by enhancing productive ribosome interactions with the outer mitochondrial membrane and blocks the inappropriate interaction of ribosomes translating non-secretory nascent polypeptides with translocation sites in the membrane of the endoplasmic reticulum. EGD2 may also be involved in transcription regulation. The chain is Nascent polypeptide-associated complex subunit alpha (EGD2) from Lodderomyces elongisporus (strain ATCC 11503 / CBS 2605 / JCM 1781 / NBRC 1676 / NRRL YB-4239) (Yeast).